The following is a 42-amino-acid chain: uncharacterized protein (42 aa).

The segment at 20 to 42 (RSGRAERGVRAHSPAWSERPTPN) is disordered.

This is an uncharacterized protein from Escherichia coli.